The chain runs to 609 residues: Sulfite reductase [NADPH] flavoprotein alpha-component (609 aa).

The Flavodoxin-like domain occupies 72–210 (ITLISASQTG…LAAQWRRQLV (139 aa)). FMN is bound by residues 78–83 (SQTGNA) and 125–128 (STQG). Residues 244 to 458 (SSPLQATFAV…IEHNDNFRLP (215 aa)) enclose the FAD-binding FR-type domain. FAD-binding positions include T332, Q366, 396–399 (RLYS), 414–416 (TVG), Y420, and 429–432 (GGAS). NADP(+) contacts are provided by residues 529-530 (SR), 535-539 (KIYVQ), and D571. Y609 is a binding site for FAD.

The protein belongs to the NADPH-dependent sulphite reductase flavoprotein subunit CysJ family. This sequence in the N-terminal section; belongs to the flavodoxin family. In the C-terminal section; belongs to the flavoprotein pyridine nucleotide cytochrome reductase family. Alpha(8)-beta(8). The alpha component is a flavoprotein, the beta component is a hemoprotein. Requires FAD as cofactor. It depends on FMN as a cofactor.

The enzyme catalyses hydrogen sulfide + 3 NADP(+) + 3 H2O = sulfite + 3 NADPH + 4 H(+). It participates in sulfur metabolism; hydrogen sulfide biosynthesis; hydrogen sulfide from sulfite (NADPH route): step 1/1. In terms of biological role, component of the sulfite reductase complex that catalyzes the 6-electron reduction of sulfite to sulfide. This is one of several activities required for the biosynthesis of L-cysteine from sulfate. The flavoprotein component catalyzes the electron flow from NADPH -&gt; FAD -&gt; FMN to the hemoprotein component. The protein is Sulfite reductase [NADPH] flavoprotein alpha-component of Pectobacterium atrosepticum (strain SCRI 1043 / ATCC BAA-672) (Erwinia carotovora subsp. atroseptica).